The primary structure comprises 284 residues: Acetylglutamate kinase (284 aa).

Residues 64–65 (GG), R86, and N177 contribute to the substrate site.

It belongs to the acetylglutamate kinase family. ArgB subfamily.

It is found in the cytoplasm. It carries out the reaction N-acetyl-L-glutamate + ATP = N-acetyl-L-glutamyl 5-phosphate + ADP. It participates in amino-acid biosynthesis; L-arginine biosynthesis; N(2)-acetyl-L-ornithine from L-glutamate: step 2/4. In terms of biological role, catalyzes the ATP-dependent phosphorylation of N-acetyl-L-glutamate. The protein is Acetylglutamate kinase of Haemophilus ducreyi (strain 35000HP / ATCC 700724).